The primary structure comprises 179 residues: MLDSFDKGWFVLQTYSGYENKVKENLLQRAQTYNMLDNILRVEIPTQTVNVEKNGQTKEIEENRFPGYVLVEMVMTDEAWFVVRNTPNVTGFVGSHGNRSKPTPLLEEEIRAILLSMGQTIDVFDTNIKEGDVVQIIDGAFMGQEGRVVEIENNKVKLMLNMFGSETVAEVELYQIAEL.

The region spanning 130–157 is the KOW domain; that stretch reads EGDVVQIIDGAFMGQEGRVVEIENNKVK.

Belongs to the NusG family.

In terms of biological role, participates in transcription elongation, termination and antitermination. This Streptococcus pyogenes serotype M1 protein is Transcription termination/antitermination protein NusG.